Consider the following 40-residue polypeptide: MADTTGRIPLWLIGTVAGIAVIGLVGVFFYGSYSGLGSSL.

A helical membrane pass occupies residues I8–F28.

The protein belongs to the PsbJ family. In terms of assembly, PSII is composed of 1 copy each of membrane proteins PsbA, PsbB, PsbC, PsbD, PsbE, PsbF, PsbH, PsbI, PsbJ, PsbK, PsbL, PsbM, PsbT, PsbX, PsbY, PsbZ, Psb30/Ycf12, at least 3 peripheral proteins of the oxygen-evolving complex and a large number of cofactors. It forms dimeric complexes.

The protein localises to the plastid. It localises to the chloroplast thylakoid membrane. In terms of biological role, one of the components of the core complex of photosystem II (PSII). PSII is a light-driven water:plastoquinone oxidoreductase that uses light energy to abstract electrons from H(2)O, generating O(2) and a proton gradient subsequently used for ATP formation. It consists of a core antenna complex that captures photons, and an electron transfer chain that converts photonic excitation into a charge separation. This Secale cereale (Rye) protein is Photosystem II reaction center protein J.